A 24-amino-acid polypeptide reads, in one-letter code: Superoxide dismutase [Cu-Zn], chloroplastic (24 aa).

The protein belongs to the Cu-Zn superoxide dismutase family. As to quaternary structure, homodimer. Cu cation serves as cofactor. Requires Zn(2+) as cofactor.

The protein localises to the plastid. It localises to the chloroplast. The catalysed reaction is 2 superoxide + 2 H(+) = H2O2 + O2. In terms of biological role, destroys radicals which are normally produced within the cells and which are toxic to biological systems. This chain is Superoxide dismutase [Cu-Zn], chloroplastic, found in Picea abies (Norway spruce).